The chain runs to 207 residues: Ribosomal RNA small subunit methyltransferase G (207 aa).

Residues G74, L79, 125-126 (VE), and R140 each bind S-adenosyl-L-methionine.

The protein belongs to the methyltransferase superfamily. RNA methyltransferase RsmG family.

It localises to the cytoplasm. The catalysed reaction is guanosine(527) in 16S rRNA + S-adenosyl-L-methionine = N(7)-methylguanosine(527) in 16S rRNA + S-adenosyl-L-homocysteine. Functionally, specifically methylates the N7 position of guanine in position 527 of 16S rRNA. In Shewanella piezotolerans (strain WP3 / JCM 13877), this protein is Ribosomal RNA small subunit methyltransferase G.